Reading from the N-terminus, the 415-residue chain is Probable glucuronosyltransferase Os03g0287800 (415 aa).

The Cytoplasmic portion of the chain corresponds to 1–25 (MGSSTDHGGAGGRGKKGSGSQLWKK). Residues 26-43 (ALLHSSLCFVMGFFTGFA) traverse the membrane as a helical; Signal-anchor for type II membrane protein segment. Residues 44 to 415 (PSSVSDWTSA…GGRFLSGDFC (372 aa)) are Lumenal-facing. 4 N-linked (GlcNAc...) asparagine glycosylation sites follow: asparagine 78, asparagine 165, asparagine 257, and asparagine 287.

The protein belongs to the glycosyltransferase 43 family.

It localises to the golgi apparatus membrane. Functionally, involved in the synthesis of glucuronoxylan hemicellulose in secondary cell walls. The protein is Probable glucuronosyltransferase Os03g0287800 of Oryza sativa subsp. japonica (Rice).